A 243-amino-acid chain; its full sequence is 4-phosphopantoate--beta-alanine ligase (243 aa).

Residues Arg-15, Arg-37, Asp-176–Asn-178, and Arg-182–Thr-183 each bind ATP.

The protein belongs to the archaeal phosphopantothenate synthetase family. In terms of assembly, homodimer.

It carries out the reaction (R)-4-phosphopantoate + beta-alanine + ATP = (R)-4'-phosphopantothenate + AMP + diphosphate + H(+). It functions in the pathway cofactor biosynthesis; coenzyme A biosynthesis. Functionally, catalyzes the condensation of (R)-4-phosphopantoate and beta-alanine to 4'-phosphopantothenate in the CoA biosynthesis pathway. The sequence is that of 4-phosphopantoate--beta-alanine ligase from Methanospirillum hungatei JF-1 (strain ATCC 27890 / DSM 864 / NBRC 100397 / JF-1).